The following is a 161-amino-acid chain: RNA pyrophosphohydrolase (161 aa).

The Nudix hydrolase domain maps to 12–154 (PYRPGVGMMI…KRKLYQAVVK (143 aa)). The Nudix box motif lies at 46–67 (GGIVPGETPSIAAMREMLEEIG).

It belongs to the Nudix hydrolase family. RppH subfamily. The cofactor is a divalent metal cation.

In terms of biological role, accelerates the degradation of transcripts by removing pyrophosphate from the 5'-end of triphosphorylated RNA, leading to a more labile monophosphorylated state that can stimulate subsequent ribonuclease cleavage. This Rickettsia typhi (strain ATCC VR-144 / Wilmington) protein is RNA pyrophosphohydrolase.